The chain runs to 163 residues: SsrA-binding protein (163 aa).

Positions 140–157 are enriched in basic and acidic residues; it reads RRGAIAERESKREMDRAL. The disordered stretch occupies residues 140-163; it reads RRGAIAERESKREMDRALARGRRR.

The protein belongs to the SmpB family.

Its subcellular location is the cytoplasm. Required for rescue of stalled ribosomes mediated by trans-translation. Binds to transfer-messenger RNA (tmRNA), required for stable association of tmRNA with ribosomes. tmRNA and SmpB together mimic tRNA shape, replacing the anticodon stem-loop with SmpB. tmRNA is encoded by the ssrA gene; the 2 termini fold to resemble tRNA(Ala) and it encodes a 'tag peptide', a short internal open reading frame. During trans-translation Ala-aminoacylated tmRNA acts like a tRNA, entering the A-site of stalled ribosomes, displacing the stalled mRNA. The ribosome then switches to translate the ORF on the tmRNA; the nascent peptide is terminated with the 'tag peptide' encoded by the tmRNA and targeted for degradation. The ribosome is freed to recommence translation, which seems to be the essential function of trans-translation. The chain is SsrA-binding protein from Anaeromyxobacter dehalogenans (strain 2CP-C).